The following is a 253-amino-acid chain: Indole-3-glycerol phosphate synthase (253 aa).

It belongs to the TrpC family.

It catalyses the reaction 1-(2-carboxyphenylamino)-1-deoxy-D-ribulose 5-phosphate + H(+) = (1S,2R)-1-C-(indol-3-yl)glycerol 3-phosphate + CO2 + H2O. It functions in the pathway amino-acid biosynthesis; L-tryptophan biosynthesis; L-tryptophan from chorismate: step 4/5. This chain is Indole-3-glycerol phosphate synthase, found in Petrotoga mobilis (strain DSM 10674 / SJ95).